The chain runs to 271 residues: 4-hydroxy-tetrahydrodipicolinate reductase (271 aa).

Position 8-13 (8-13 (GITGRM)) interacts with NAD(+). Arg35 provides a ligand contact to NADP(+). NAD(+) contacts are provided by residues 100 to 102 (GST) and 124 to 127 (APNM). The Proton donor/acceptor role is filled by His157. His158 is a (S)-2,3,4,5-tetrahydrodipicolinate binding site. Lys161 (proton donor) is an active-site residue. 167–168 (GT) lines the (S)-2,3,4,5-tetrahydrodipicolinate pocket.

It belongs to the DapB family.

Its subcellular location is the cytoplasm. The enzyme catalyses (S)-2,3,4,5-tetrahydrodipicolinate + NAD(+) + H2O = (2S,4S)-4-hydroxy-2,3,4,5-tetrahydrodipicolinate + NADH + H(+). It carries out the reaction (S)-2,3,4,5-tetrahydrodipicolinate + NADP(+) + H2O = (2S,4S)-4-hydroxy-2,3,4,5-tetrahydrodipicolinate + NADPH + H(+). It participates in amino-acid biosynthesis; L-lysine biosynthesis via DAP pathway; (S)-tetrahydrodipicolinate from L-aspartate: step 4/4. Its function is as follows. Catalyzes the conversion of 4-hydroxy-tetrahydrodipicolinate (HTPA) to tetrahydrodipicolinate. This is 4-hydroxy-tetrahydrodipicolinate reductase from Myxococcus xanthus (strain DK1622).